The chain runs to 545 residues: Chaperonin GroEL 3 (545 aa).

ATP is bound by residues 30 to 33 (TLGP), K51, 87 to 91 (DGTTT), G415, and D496.

This sequence belongs to the chaperonin (HSP60) family. Forms a cylinder of 14 subunits composed of two heptameric rings stacked back-to-back. Interacts with the co-chaperonin GroES.

It is found in the cytoplasm. It catalyses the reaction ATP + H2O + a folded polypeptide = ADP + phosphate + an unfolded polypeptide.. Its function is as follows. Together with its co-chaperonin GroES, plays an essential role in assisting protein folding. The GroEL-GroES system forms a nano-cage that allows encapsulation of the non-native substrate proteins and provides a physical environment optimized to promote and accelerate protein folding. This Nitrobacter hamburgensis (strain DSM 10229 / NCIMB 13809 / X14) protein is Chaperonin GroEL 3.